Here is a 385-residue protein sequence, read N- to C-terminus: 8-amino-7-oxononanoate synthase (385 aa).

Residue Arg21 participates in substrate binding. Residue 108-109 (GF) participates in pyridoxal 5'-phosphate binding. Residue His133 coordinates substrate. Residues Ser179, His207, and Thr233 each contribute to the pyridoxal 5'-phosphate site. N6-(pyridoxal phosphate)lysine is present on Lys236. Thr352 is a binding site for substrate.

This sequence belongs to the class-II pyridoxal-phosphate-dependent aminotransferase family. BioF subfamily. As to quaternary structure, homodimer. Requires pyridoxal 5'-phosphate as cofactor.

The catalysed reaction is 6-carboxyhexanoyl-[ACP] + L-alanine + H(+) = (8S)-8-amino-7-oxononanoate + holo-[ACP] + CO2. Its pathway is cofactor biosynthesis; biotin biosynthesis. In terms of biological role, catalyzes the decarboxylative condensation of pimeloyl-[acyl-carrier protein] and L-alanine to produce 8-amino-7-oxononanoate (AON), [acyl-carrier protein], and carbon dioxide. This Salmonella newport (strain SL254) protein is 8-amino-7-oxononanoate synthase.